The chain runs to 212 residues: Large ribosomal subunit protein bL25 (212 aa).

Belongs to the bacterial ribosomal protein bL25 family. CTC subfamily. In terms of assembly, part of the 50S ribosomal subunit; part of the 5S rRNA/L5/L18/L25 subcomplex. Contacts the 5S rRNA. Binds to the 5S rRNA independently of L5 and L18.

Its function is as follows. This is one of the proteins that binds to the 5S RNA in the ribosome where it forms part of the central protuberance. The protein is Large ribosomal subunit protein bL25 of Leptospira interrogans serogroup Icterohaemorrhagiae serovar copenhageni (strain Fiocruz L1-130).